The chain runs to 202 residues: LexA repressor 1 (202 aa).

The segment at residues 28 to 48 (RAEIAQELGFKSPNAAEEHLK) is a DNA-binding region (H-T-H motif). Catalysis depends on for autocatalytic cleavage activity residues S123 and K160.

It belongs to the peptidase S24 family. As to quaternary structure, homodimer.

The enzyme catalyses Hydrolysis of Ala-|-Gly bond in repressor LexA.. In terms of biological role, represses a number of genes involved in the response to DNA damage (SOS response), including recA and lexA. In the presence of single-stranded DNA, RecA interacts with LexA causing an autocatalytic cleavage which disrupts the DNA-binding part of LexA, leading to derepression of the SOS regulon and eventually DNA repair. This is LexA repressor 1 from Pseudomonas syringae pv. tomato (strain ATCC BAA-871 / DC3000).